Consider the following 558-residue polypeptide: Formate--tetrahydrofolate ligase (558 aa).

66-73 is a binding site for ATP; sequence TPAGEGKT.

It belongs to the formate--tetrahydrofolate ligase family.

The catalysed reaction is (6S)-5,6,7,8-tetrahydrofolate + formate + ATP = (6R)-10-formyltetrahydrofolate + ADP + phosphate. The protein operates within one-carbon metabolism; tetrahydrofolate interconversion. The chain is Formate--tetrahydrofolate ligase from Neisseria gonorrhoeae (strain NCCP11945).